Consider the following 133-residue polypeptide: MRDDAAVDILDLTPLGESYRPRELEPEREFNRINLGIVDGGLPKDFLHVARVVLVGDLGHELLDLFLLEISAARSLDGGREVVGDAPNELRESIHARLVPDAAVDHSPHGISRAHDHLGEVELHVAGEDRIVA.

This is an uncharacterized protein from Human adenovirus B serotype 7 (HAdV-7).